A 153-amino-acid polypeptide reads, in one-letter code: Cystatin-9 (153 aa).

Positions 1 to 27 (MGRQRRCRWAQPWTLLLLLLGPRLLVT) are cleaved as a signal peptide.

Belongs to the cystatin family.

The protein localises to the secreted. In terms of biological role, may play a role in hematopoietic differentiation or inflammation. The polypeptide is Cystatin-9 (CST9) (Bos taurus (Bovine)).